The chain runs to 300 residues: Pantothenate synthetase (300 aa).

30–37 is an ATP binding site; that stretch reads MGYLHEGH. His37 functions as the Proton donor in the catalytic mechanism. Position 61 (Gln61) interacts with (R)-pantoate. Gln61 contributes to the beta-alanine binding site. An ATP-binding site is contributed by 147–150; the sequence is GMKD. Residue Gln153 participates in (R)-pantoate binding. ATP is bound by residues Val176 and 184–187; that span reads KSSR.

Belongs to the pantothenate synthetase family. As to quaternary structure, homodimer.

Its subcellular location is the cytoplasm. It carries out the reaction (R)-pantoate + beta-alanine + ATP = (R)-pantothenate + AMP + diphosphate + H(+). Its pathway is cofactor biosynthesis; (R)-pantothenate biosynthesis; (R)-pantothenate from (R)-pantoate and beta-alanine: step 1/1. Catalyzes the condensation of pantoate with beta-alanine in an ATP-dependent reaction via a pantoyl-adenylate intermediate. The polypeptide is Pantothenate synthetase (Geobacillus kaustophilus (strain HTA426)).